We begin with the raw amino-acid sequence, 302 residues long: Orotidine 5'-phosphate decarboxylase (302 aa).

K105 serves as the catalytic Proton donor.

This sequence belongs to the OMP decarboxylase family. Type 2 subfamily.

It catalyses the reaction orotidine 5'-phosphate + H(+) = UMP + CO2. Its pathway is pyrimidine metabolism; UMP biosynthesis via de novo pathway; UMP from orotate: step 2/2. This chain is Orotidine 5'-phosphate decarboxylase, found in Rhodopirellula baltica (strain DSM 10527 / NCIMB 13988 / SH1).